The sequence spans 212 residues: Large ribosomal subunit protein uL1 (212 aa).

Belongs to the universal ribosomal protein uL1 family. In terms of assembly, part of the 50S ribosomal subunit.

In terms of biological role, binds directly to 23S rRNA. Probably involved in E site tRNA release. Its function is as follows. Protein L1 is also a translational repressor protein, it controls the translation of its operon by binding to its mRNA. In Halobacterium salinarum (strain ATCC 29341 / DSM 671 / R1), this protein is Large ribosomal subunit protein uL1.